Here is a 547-residue protein sequence, read N- to C-terminus: ATP synthase subunit alpha (547 aa).

172–179 is an ATP binding site; sequence GDRKTGKT.

The protein belongs to the ATPase alpha/beta chains family. In terms of assembly, F-type ATPases have 2 components, CF(1) - the catalytic core - and CF(0) - the membrane proton channel. CF(1) has five subunits: alpha(3), beta(3), gamma(1), delta(1), epsilon(1). CF(0) has three main subunits: a(1), b(2) and c(9-12). The alpha and beta chains form an alternating ring which encloses part of the gamma chain. CF(1) is attached to CF(0) by a central stalk formed by the gamma and epsilon chains, while a peripheral stalk is formed by the delta and b chains.

It localises to the cell membrane. The catalysed reaction is ATP + H2O + 4 H(+)(in) = ADP + phosphate + 5 H(+)(out). In terms of biological role, produces ATP from ADP in the presence of a proton gradient across the membrane. The alpha chain is a regulatory subunit. The polypeptide is ATP synthase subunit alpha (Rhodococcus jostii (strain RHA1)).